A 61-amino-acid chain; its full sequence is Metallothionein-1A (61 aa).

Methionine 1 carries the N-acetylmethionine modification. The beta stretch occupies residues 1-29 (MDPNCSCPTGGSCSCAGSCTCKACRCTSC). A divalent metal cation-binding residues include cysteine 5, cysteine 7, cysteine 13, cysteine 15, cysteine 19, cysteine 21, cysteine 24, cysteine 26, cysteine 29, cysteine 33, cysteine 34, cysteine 36, cysteine 37, cysteine 41, cysteine 44, cysteine 48, cysteine 50, and cysteine 57. The tract at residues 30 to 61 (KKSCCSCCPAGCARCAQGCICKGASDKCSCCA) is alpha. A Phosphoserine modification is found at serine 58. A divalent metal cation contacts are provided by cysteine 59 and cysteine 60.

Belongs to the metallothionein superfamily. Type 1 family. Monomer.

Metallothioneins have a high content of cysteine residues that bind various heavy metals; these proteins are transcriptionally regulated by both heavy metals and glucocorticoids. The protein is Metallothionein-1A (MT1A) of Sus scrofa (Pig).